A 470-amino-acid chain; its full sequence is MPRPLYLSPDRLFPSDPAQRDIARRLYKAVAGLPIVSPHGHTDPAWFAGDAPFGNAAELLLHPDHYVFRMLYSQGVSLDALGIGNADADPRESWRLFAENYHLFRATPSRMWMDWVFAEVFGFDVQLSAETSDLYYDRITEALAIDAFRPRALFDRFGIEVIATTESPLDSLDHHAVIRAANASGEWGGRVITAYRPDPVVDPEFEGFRDNLARFSNLSGEDAFSYSGYLAAHRKRRAFFASMGATSTDHGHPSAATADLSETQAEALFARVTGEDMSAADAELFRAHMLTVMAGMSLDDGLVMQIHPGAFRNHNPWLFANHGRDKGADIPTATDYVHALRPLLGRYGNEADLTIILFTLDETSYARELAPLAGHYPALKLGPAWWFHDSPEGMRRFRSQMTETAGFYNTVGFNDDTRAFLSIPARHDVARRIDCGFLAQLVSEHRLEEWEAAELAADLSYNLAKASYKL.

This sequence belongs to the metallo-dependent hydrolases superfamily. Uronate isomerase family.

It carries out the reaction D-glucuronate = D-fructuronate. The catalysed reaction is aldehydo-D-galacturonate = keto-D-tagaturonate. It functions in the pathway carbohydrate metabolism; pentose and glucuronate interconversion. This Sphingopyxis alaskensis (strain DSM 13593 / LMG 18877 / RB2256) (Sphingomonas alaskensis) protein is Uronate isomerase.